A 568-amino-acid polypeptide reads, in one-letter code: Sphingosine-1-phosphate lyase 1 (568 aa).

Residues 1 to 41 (MPSTDLLKLKDFEPYLEILEAYSTKAKNYVNGYCTKYEPWQ) lie on the Lumenal side of the membrane. The chain crosses the membrane as a helical; Signal-anchor for type III membrane protein span at residues 42 to 62 (LIAGSVLCTLLVVWVYELIFQ). Residues 63–568 (PESLWSRFKN…NQMNGSPKPR (506 aa)) are Cytoplasmic-facing. The residue at position 353 (Lys-353) is an N6-(pyridoxal phosphate)lysine; alternate. The residue at position 353 (Lys-353) is an N6-acetyllysine; alternate. 2 positions are modified to 3'-nitrotyrosine: Tyr-356 and Tyr-366. Ser-564 is subject to Phosphoserine.

This sequence belongs to the group II decarboxylase family. Sphingosine-1-phosphate lyase subfamily. As to quaternary structure, homodimer. Requires pyridoxal 5'-phosphate as cofactor.

Its subcellular location is the endoplasmic reticulum membrane. The enzyme catalyses sphinganine 1-phosphate = hexadecanal + phosphoethanolamine. It catalyses the reaction sphing-4-enine 1-phosphate = (2E)-hexadecenal + phosphoethanolamine. It participates in lipid metabolism; sphingolipid metabolism. Cleaves phosphorylated sphingoid bases (PSBs), such as sphingosine-1-phosphate, into fatty aldehydes and phosphoethanolamine. Elevates stress-induced ceramide production and apoptosis. Required for global lipid homeostasis in liver and cholesterol homeostasis in fibroblasts. Involved in the regulation of pro-inflammatory response and neutrophil trafficking. Modulates neuronal autophagy via phosphoethanolamine production which regulates accumulation of aggregate-prone proteins such as APP. Seems to play a role in establishing neuronal contact sites and axonal maintenance. This chain is Sphingosine-1-phosphate lyase 1, found in Rattus norvegicus (Rat).